A 284-amino-acid polypeptide reads, in one-letter code: Protoheme IX farnesyltransferase (284 aa).

Helical transmembrane passes span 13–33 (IIIGNIILIIGSFLFSSFPFF), 35–55 (VFLFFFTILGTSLVIASSCIF), 87–107 (IFASFIGIVGFFILGLFVNIL), 108–128 (SMFLSFIGFVIYVFFYTFFLK), 133–153 (YSTFIGSFSGSIPSVIGHTAI), 162–182 (FLLFIIFIFWQMSHFYAIAIL), 224–244 (FLGYLSYIFLLFFSFFSFYWL), and 264–284 (FYYSIAVVILFNFLISIDFIF).

It belongs to the UbiA prenyltransferase family. Protoheme IX farnesyltransferase subfamily.

It is found in the cell membrane. It carries out the reaction heme b + (2E,6E)-farnesyl diphosphate + H2O = Fe(II)-heme o + diphosphate. The protein operates within porphyrin-containing compound metabolism; heme O biosynthesis; heme O from protoheme: step 1/1. Converts heme B (protoheme IX) to heme O by substitution of the vinyl group on carbon 2 of heme B porphyrin ring with a hydroxyethyl farnesyl side group. The protein is Protoheme IX farnesyltransferase of Buchnera aphidicola subsp. Schizaphis graminum (strain Sg).